Reading from the N-terminus, the 329-residue chain is Coiled-coil domain-containing protein 54 (329 aa).

Residues 86-149 (NIVSSISNIQ…VTELESQNSY (64 aa)) are a coiled coil. Residues 178 to 191 (TPKGTATSPDTVIS) are compositionally biased toward polar residues. Residues 178–214 (TPKGTATSPDTVISSAEPERVSSYPEPTGELKKKTTS) are disordered. T182 carries the post-translational modification Phosphothreonine.

The polypeptide is Coiled-coil domain-containing protein 54 (Ccdc54) (Mus musculus (Mouse)).